The following is a 114-amino-acid chain: Large ribosomal subunit protein bL19 (114 aa).

This sequence belongs to the bacterial ribosomal protein bL19 family.

This protein is located at the 30S-50S ribosomal subunit interface and may play a role in the structure and function of the aminoacyl-tRNA binding site. In Lactococcus lactis subsp. lactis (strain IL1403) (Streptococcus lactis), this protein is Large ribosomal subunit protein bL19.